Here is a 198-residue protein sequence, read N- to C-terminus: Carnitine operon protein CaiE (198 aa).

Residues 179–198 are disordered; the sequence is VEENRPRLKGTTDVKPKSAQ. The segment covering 180–198 has biased composition (basic and acidic residues); that stretch reads EENRPRLKGTTDVKPKSAQ.

The protein belongs to the transferase hexapeptide repeat family.

The protein operates within amine and polyamine metabolism; carnitine metabolism. Functionally, overproduction of CaiE stimulates the activity of CaiB and CaiD. The polypeptide is Carnitine operon protein CaiE (Salmonella typhi).